Consider the following 245-residue polypeptide: 3-deoxy-manno-octulosonate cytidylyltransferase (245 aa).

The protein belongs to the KdsB family.

The protein localises to the cytoplasm. The enzyme catalyses 3-deoxy-alpha-D-manno-oct-2-ulosonate + CTP = CMP-3-deoxy-beta-D-manno-octulosonate + diphosphate. The protein operates within nucleotide-sugar biosynthesis; CMP-3-deoxy-D-manno-octulosonate biosynthesis; CMP-3-deoxy-D-manno-octulosonate from 3-deoxy-D-manno-octulosonate and CTP: step 1/1. It participates in bacterial outer membrane biogenesis; lipopolysaccharide biosynthesis. In terms of biological role, activates KDO (a required 8-carbon sugar) for incorporation into bacterial lipopolysaccharide in Gram-negative bacteria. This chain is 3-deoxy-manno-octulosonate cytidylyltransferase, found in Rhodopseudomonas palustris (strain TIE-1).